The chain runs to 357 residues: Outer membrane porin protein OmpD (357 aa).

The first 21 residues, 1-21, serve as a signal peptide directing secretion; that stretch reads MKLKLVAVAVTTLLAAGAVNA.

The protein belongs to the Gram-negative porin family. In terms of assembly, homotrimer.

The protein localises to the cell outer membrane. Functionally, forms pores that allow passive diffusion of small molecules across the outer membrane. The sequence is that of Outer membrane porin protein OmpD (ompD) from Citrobacter koseri (strain ATCC BAA-895 / CDC 4225-83 / SGSC4696).